Reading from the N-terminus, the 170-residue chain is Peptide deformylase-like (170 aa).

Glu139 is an active-site residue.

It belongs to the polypeptide deformylase family.

This is Peptide deformylase-like from Bradyrhizobium diazoefficiens (strain JCM 10833 / BCRC 13528 / IAM 13628 / NBRC 14792 / USDA 110).